Consider the following 135-residue polypeptide: uncharacterized protein (135 aa).

3 consecutive transmembrane segments (helical) span residues 13 to 35 (AKVI…AMYL), 82 to 101 (VAVF…LLSI), and 108 to 130 (IYRI…PLIL).

The protein localises to the cell membrane. This is an uncharacterized protein from Archaeoglobus fulgidus (strain ATCC 49558 / DSM 4304 / JCM 9628 / NBRC 100126 / VC-16).